We begin with the raw amino-acid sequence, 48 residues long: Large ribosomal subunit protein bL32 (48 aa).

Residues 28–48 (VKDKDGSWKMPHRINKTTGEY) are disordered.

This sequence belongs to the bacterial ribosomal protein bL32 family.

This chain is Large ribosomal subunit protein bL32, found in Campylobacter concisus (strain 13826).